A 614-amino-acid chain; its full sequence is MRLTRALTPAILALPAAHAAASLQDWQSLNTTLDHRLHAVTPLALPCFSIYNNHSHAPNEDACLNIQDHYTNASYRVDQVSAYVFSQSETCSPIPSQQCELDPSDPSNPAAYTNISCNTGSLPAYYIDVQHASDVTAAFHFAAKTNTAISIKNSGHDYNGRSSGPGSLSLRTRTLRSTTYHPSFTPASCKTPTGKAVTLGAGVNFHEVYTFAHENKVTFVGGSGPTVGASGGWVLTGGHGVLSRAYGLGIDRVVEFELVTPDGEHRIANACQNADLFWALRGGGGSTFGVVLSSTHRVEPEAPLSLAYLALPPNASSSTSAAFLDLLVNYTLPWAEDAWGGFGNAAATILATPLLSLPEAKTSMATAIDFVTAHGGTGYVETLSSFYEMYTKYIVPSASAVGSVRFNHNWIIPNSLFATASGQKKLRKHLDWMGSVGLVPGLLETTPYLYSGNGHGRSNNNNSNNSSTSTSTSTSSKNGSVKPYAYGGKETTSSTPAWRNSAAVLIAEVGWAFNATLSEKKALAKTLVEASERVRELAPGSGAYANEAHPWVEDWQDAFWGGNYRRLADLKKKWDPKGLLGCWHCVGSEGEGKKETGTAWRAEVVGGKCLGRLI.

The first 19 residues, 1–19, serve as a signal peptide directing secretion; sequence MRLTRALTPAILALPAAHA. Asn30, Asn53, Asn72, and Asn114 each carry an N-linked (GlcNAc...) asparagine glycan. The region spanning 119–301 is the FAD-binding PCMH-type domain; sequence TGSLPAYYID…LSSTHRVEPE (183 aa). Asn314, Asn329, Asn461, Asn465, Asn478, and Asn514 each carry an N-linked (GlcNAc...) asparagine glycan. Residues 453 to 495 are disordered; it reads NGHGRSNNNNSNNSSTSTSTSTSSKNGSVKPYAYGGKETTSST. Low complexity predominate over residues 456–480; the sequence is GRSNNNNSNNSSTSTSTSTSSKNGS.

Belongs to the oxygen-dependent FAD-linked oxidoreductase family. FAD is required as a cofactor.

Its pathway is mycotoxin biosynthesis. Functionally, FAD-linked oxidoreductase; part of the gene cluster that mediates the biosynthesis of the cytotoxic leucine-containing cytochalasans, including aspochalasin C, aspochalasin E, TMC-169, flavichalasine F, aspergillin PZ, aspochalasin M and flavichalasine G. The first step in the pathway is catalyzed by the hybrid PKS-NRPS ffsA that utilizes 8 units of malonyl-CoA to iteratively assemble the octaketide chain before addition of L-leucine by the C-terminal NRPS modules. Because ffsA lacks a designated enoylreductase (ER) domain, the required activity is provided the enoyl reductase fssC. The methyltransferase (MT) domain of ffsA catalyzes the alpha-methylation at C10 and C14 using S-adenosyl-L-methionine as the methyl-donating cosubstrate. Reduction by the hydrolyase ffsE, followed by dehydration and intra-molecular Diels-Alder cyclization by the Diels-Alderase ffsF then yield the required isoindolone-fused macrocycle. A number of oxidative steps catalyzed by the tailoring cytochrome P450 monooxygenase ffsD, the FAD-linked oxidoreductase ffsJ and the short-chain dehydrogenase/reductase ffsI, are further required to afford the final products. The protein is FAD-linked oxidoreductase ffsJ of Aspergillus flavipes.